A 92-amino-acid chain; its full sequence is Small ribosomal subunit protein bS20 (92 aa).

This sequence belongs to the bacterial ribosomal protein bS20 family.

In terms of biological role, binds directly to 16S ribosomal RNA. The polypeptide is Small ribosomal subunit protein bS20 (Thermosipho africanus (strain TCF52B)).